Consider the following 514-residue polypeptide: Major facilitator superfamily domain-containing protein 4A (514 aa).

5 helical membrane passes run 19-39, 53-73, 82-102, 107-127, and 139-159; these read LTYW…GPTL, ISWV…LGGV, LWAL…IPFC, VLAL…TVAN, and AVFL…SPLI. 2 N-linked (GlcNAc...) asparagine glycosylation sites follow: asparagine 177 and asparagine 203. Helical transmembrane passes span 221–241, 307–327, 347–367, 376–396, 400–420, 438–458, and 466–486; these read YAFW…LMLL, FFAI…LTGA, VAGY…LLSI, ATMV…LLIF, VVFL…TFPS, VLVT…GSIF, and FLVC…LLLF.

It belongs to the major facilitator superfamily.

The protein resides in the membrane. The chain is Major facilitator superfamily domain-containing protein 4A (MFSD4A) from Pongo abelii (Sumatran orangutan).